Reading from the N-terminus, the 335-residue chain is Fructose-1,6-bisphosphatase class 1 (335 aa).

Mg(2+) is bound by residues Glu92, Asp115, Leu117, and Asp118. Substrate is bound by residues 118–121 (DGSS), Asn211, Tyr244, 262–264 (YLY), and Lys274. Position 280 (Glu280) interacts with Mg(2+).

This sequence belongs to the FBPase class 1 family. Homotetramer. Requires Mg(2+) as cofactor.

It localises to the cytoplasm. It carries out the reaction beta-D-fructose 1,6-bisphosphate + H2O = beta-D-fructose 6-phosphate + phosphate. It functions in the pathway carbohydrate biosynthesis; gluconeogenesis. This is Fructose-1,6-bisphosphatase class 1 from Teredinibacter turnerae (strain ATCC 39867 / T7901).